Here is a 367-residue protein sequence, read N- to C-terminus: tRNA-specific 2-thiouridylase MnmA (367 aa).

ATP is bound by residues 12 to 19 and methionine 38; that span reads GMSGGVDS. The tract at residues 98–100 is interaction with target base in tRNA; that stretch reads NPD. Catalysis depends on cysteine 103, which acts as the Nucleophile. Cysteine 103 and cysteine 200 are disulfide-bonded. Glycine 128 serves as a coordination point for ATP. Positions 150 to 152 are interaction with tRNA; that stretch reads KDQ. The Cysteine persulfide intermediate role is filled by cysteine 200. The interaction with tRNA stretch occupies residues 312–313; that stretch reads RY.

It belongs to the MnmA/TRMU family. As to quaternary structure, interacts with TusE.

The protein localises to the cytoplasm. It carries out the reaction S-sulfanyl-L-cysteinyl-[protein] + uridine(34) in tRNA + AH2 + ATP = 2-thiouridine(34) in tRNA + L-cysteinyl-[protein] + A + AMP + diphosphate + H(+). Its function is as follows. Catalyzes the 2-thiolation of uridine at the wobble position (U34) of tRNA(Lys), tRNA(Glu) and tRNA(Gln), leading to the formation of s(2)U34, the first step of tRNA-mnm(5)s(2)U34 synthesis. Sulfur is provided by IscS, via a sulfur-relay system. Binds ATP and its substrate tRNAs. This is tRNA-specific 2-thiouridylase MnmA from Serratia proteamaculans (strain 568).